A 159-amino-acid polypeptide reads, in one-letter code: RNA pyrophosphohydrolase (159 aa).

One can recognise a Nudix hydrolase domain in the interval 6–149; sequence GFRPNVGIIL…KREVYRRALK (144 aa). Positions 38 to 59 match the Nudix box motif; the sequence is GGINPDETPEDALYRELNEEVG.

Belongs to the Nudix hydrolase family. RppH subfamily. Requires a divalent metal cation as cofactor.

Its function is as follows. Accelerates the degradation of transcripts by removing pyrophosphate from the 5'-end of triphosphorylated RNA, leading to a more labile monophosphorylated state that can stimulate subsequent ribonuclease cleavage. In Pseudomonas fluorescens (strain SBW25), this protein is RNA pyrophosphohydrolase.